The chain runs to 240 residues: Adenosylcobinamide-GDP ribazoletransferase (240 aa).

A run of 5 helical transmembrane segments spans residues 31–51 (LLYY…ASHL), 62–81 (ALLL…DGLA), 109–129 (IAVV…WVLV), 133–153 (IGAQ…GLFL), and 179–199 (VLLV…LLAL).

This sequence belongs to the CobS family. Mg(2+) serves as cofactor.

It is found in the cell inner membrane. The enzyme catalyses alpha-ribazole + adenosylcob(III)inamide-GDP = adenosylcob(III)alamin + GMP + H(+). It catalyses the reaction alpha-ribazole 5'-phosphate + adenosylcob(III)inamide-GDP = adenosylcob(III)alamin 5'-phosphate + GMP + H(+). It functions in the pathway cofactor biosynthesis; adenosylcobalamin biosynthesis; adenosylcobalamin from cob(II)yrinate a,c-diamide: step 7/7. Functionally, joins adenosylcobinamide-GDP and alpha-ribazole to generate adenosylcobalamin (Ado-cobalamin). Also synthesizes adenosylcobalamin 5'-phosphate from adenosylcobinamide-GDP and alpha-ribazole 5'-phosphate. The polypeptide is Adenosylcobinamide-GDP ribazoletransferase (Pseudomonas putida (strain ATCC 47054 / DSM 6125 / CFBP 8728 / NCIMB 11950 / KT2440)).